The primary structure comprises 406 residues: Cysteine desulfurase (406 aa).

The residue at position 226 (Lys226) is an N6-(pyridoxal phosphate)lysine. Cys364 serves as the catalytic Cysteine persulfide intermediate.

It belongs to the class-V pyridoxal-phosphate-dependent aminotransferase family. Csd subfamily. In terms of assembly, homodimer. Interacts with SufE and the SufBCD complex composed of SufB, SufC and SufD. The interaction with SufE is required to mediate the direct transfer of the sulfur atom from the S-sulfanylcysteine. Pyridoxal 5'-phosphate is required as a cofactor.

It is found in the cytoplasm. It catalyses the reaction (sulfur carrier)-H + L-cysteine = (sulfur carrier)-SH + L-alanine. The enzyme catalyses L-selenocysteine + AH2 = hydrogenselenide + L-alanine + A + H(+). The protein operates within cofactor biosynthesis; iron-sulfur cluster biosynthesis. In terms of biological role, cysteine desulfurases mobilize the sulfur from L-cysteine to yield L-alanine, an essential step in sulfur metabolism for biosynthesis of a variety of sulfur-containing biomolecules. Component of the suf operon, which is activated and required under specific conditions such as oxidative stress and iron limitation. Acts as a potent selenocysteine lyase in vitro, that mobilizes selenium from L-selenocysteine. Selenocysteine lyase activity is however unsure in vivo. The chain is Cysteine desulfurase from Escherichia coli (strain SE11).